Here is a 145-residue protein sequence, read N- to C-terminus: Small ribosomal subunit protein eS12A (145 aa).

Belongs to the eukaryotic ribosomal protein eS12 family. As to quaternary structure, component of the small ribosomal subunit (SSU). Mature yeast ribosomes consist of a small (40S) and a large (60S) subunit. The 40S small subunit contains 1 molecule of ribosomal RNA (18S rRNA) and at least 33 different proteins. The large 60S subunit contains 3 rRNA molecules (25S, 5.8S and 5S rRNA) and at least 46 different proteins.

The protein resides in the cytoplasm. Component of the ribosome, a large ribonucleoprotein complex responsible for the synthesis of proteins in the cell. The small ribosomal subunit (SSU) binds messenger RNAs (mRNAs) and translates the encoded message by selecting cognate aminoacyl-transfer RNA (tRNA) molecules. The large subunit (LSU) contains the ribosomal catalytic site termed the peptidyl transferase center (PTC), which catalyzes the formation of peptide bonds, thereby polymerizing the amino acids delivered by tRNAs into a polypeptide chain. The nascent polypeptides leave the ribosome through a tunnel in the LSU and interact with protein factors that function in enzymatic processing, targeting, and the membrane insertion of nascent chains at the exit of the ribosomal tunnel. This chain is Small ribosomal subunit protein eS12A (rps1201), found in Schizosaccharomyces pombe (strain 972 / ATCC 24843) (Fission yeast).